The primary structure comprises 120 residues: UPF0231 protein Ent638_0667 (120 aa).

Belongs to the UPF0231 family.

The chain is UPF0231 protein Ent638_0667 from Enterobacter sp. (strain 638).